The following is a 341-amino-acid chain: L-threonine 3-dehydrogenase (341 aa).

Cys38 is a Zn(2+) binding site. Active-site charge relay system residues include Thr40 and His43. Residues His63, Glu64, Cys93, Cys96, Cys99, and Cys107 each contribute to the Zn(2+) site. NAD(+) is bound by residues Ile175, Asp195, Arg200, Leu262–Ile264, and Ile286–Tyr287.

Belongs to the zinc-containing alcohol dehydrogenase family. As to quaternary structure, homotetramer. It depends on Zn(2+) as a cofactor.

The protein localises to the cytoplasm. It carries out the reaction L-threonine + NAD(+) = (2S)-2-amino-3-oxobutanoate + NADH + H(+). Its pathway is amino-acid degradation; L-threonine degradation via oxydo-reductase pathway; glycine from L-threonine: step 1/2. Catalyzes the NAD(+)-dependent oxidation of L-threonine to 2-amino-3-ketobutyrate. The protein is L-threonine 3-dehydrogenase of Shewanella oneidensis (strain ATCC 700550 / JCM 31522 / CIP 106686 / LMG 19005 / NCIMB 14063 / MR-1).